Consider the following 803-residue polypeptide: Leucine--tRNA ligase (803 aa).

The 'HIGH' region signature appears at 40 to 51; it reads PYPSGAGLHVGH. The 'KMSKS' region signature appears at 575-579; that stretch reads KMSKS. Lysine 578 provides a ligand contact to ATP.

It belongs to the class-I aminoacyl-tRNA synthetase family.

It localises to the cytoplasm. It carries out the reaction tRNA(Leu) + L-leucine + ATP = L-leucyl-tRNA(Leu) + AMP + diphosphate. The chain is Leucine--tRNA ligase from Listeria monocytogenes serovar 1/2a (strain ATCC BAA-679 / EGD-e).